Reading from the N-terminus, the 674-residue chain is U-box domain-containing protein 16 (674 aa).

The U-box domain occupies 273 to 347 (NIPADFRCPI…VLWCRDQKIP (75 aa)). 3 ARM repeats span residues 399–438 (TVAR…NLSI), 441–481 (QNKT…SLAG), and 484–523 (AYRR…NLVA).

The catalysed reaction is S-ubiquitinyl-[E2 ubiquitin-conjugating enzyme]-L-cysteine + [acceptor protein]-L-lysine = [E2 ubiquitin-conjugating enzyme]-L-cysteine + N(6)-ubiquitinyl-[acceptor protein]-L-lysine.. The protein operates within protein modification; protein ubiquitination. Its function is as follows. Functions as an E3 ubiquitin ligase. The protein is U-box domain-containing protein 16 (PUB16) of Arabidopsis thaliana (Mouse-ear cress).